The following is a 92-amino-acid chain: uncharacterized protein (92 aa).

An HTH arsR-type domain is found at methionine 1–glutamate 92. A DNA-binding region (H-T-H motif) is located at residues isoleucine 37 to aspartate 61.

This is an uncharacterized protein from Bacillus subtilis (strain 168).